The following is a 57-amino-acid chain: MPTVNILSYFAFSVEAVLFPMSSELWEKGYREALGYGVEKICLYSFVLVLPIAILMA.

Transmembrane regions (helical) follow at residues 4-26 (VNILSYFAFSVEAVLFPMSSELW) and 33-55 (ALGYGVEKICLYSFVLVLPIAIL).

It is found in the cell membrane. This is an uncharacterized protein from Methanocaldococcus jannaschii (strain ATCC 43067 / DSM 2661 / JAL-1 / JCM 10045 / NBRC 100440) (Methanococcus jannaschii).